The chain runs to 493 residues: MADQISGEKPAGVNRFALQCAIVASIVSIIFGYDTGVMSGAMVFIEEDLKTNDVQIEVLTGILNLCALVGSLLAGRTSDIIGRRYTIVLASILFMLGSILMGWGPNYPVLLSGRCTAGLGVGFALMVAPVYSAEIATASHRGLLASLPHLCISIGILLGYIVNYFFSKLPMHIGWRLMLGIAAVPSLVLAFGILKMPESPRWLIMQGRLKEGKEILELVSNSPEEAELRFQDIKAAAGIDPKCVDDVVKMEGKKTHGEGVWKELILRPTPAVRRVLLTALGIHFFQHASGIEAVLLYGPRIFKKAGITTKDKLFLVTIGVGIMKTTFIFTATLLLDKVGRRKLLLTSVGGMVIALTMLGFGLTMAQNAGGKLAWALVLSIVAAYSFVAFFSIGLGPITWVYSSEVFPLKLRAQGASLGVAVNRVMNATVSMSFLSLTSAITTGGAFFMFAGVAAVAWNFFFFLLPETKGKSLEEIEALFQRDGDKVRGENGAA.

Transmembrane regions (helical) follow at residues 25-45, 54-74, 85-105, 116-136, 142-162, 177-197, 275-295, 313-333, 343-363, 372-392, 414-434, and 444-464; these read SIVS…MVFI, VQIE…SLLA, YTIV…GWGP, TAGL…AEIA, GLLA…GYIV, LMLG…LKMP, VLLT…EAVL, LFLV…TATL, LLLT…FGLT, LAWA…FFSI, GASL…MSFL, and GAFF…FFLL.

It belongs to the major facilitator superfamily. Sugar transporter (TC 2.A.1.1) family.

It is found in the membrane. Its function is as follows. Plasma membrane sugar-proton symporter. The protein is Probable polyol transporter 6 (PLT6) of Arabidopsis thaliana (Mouse-ear cress).